A 456-amino-acid chain; its full sequence is Chromosomal replication initiator protein DnaA (456 aa).

The tract at residues 1-79 (MSQEIWADVL…QHPQVSFQVL (79 aa)) is domain I, interacts with DnaA modulators. The tract at residues 79–112 (LPASQDALLLPSDPPPAPISPGRAPAPPPADNRK) is domain II. A disordered region spans residues 89–112 (PSDPPPAPISPGRAPAPPPADNRK). Pro residues predominate over residues 90–108 (SDPPPAPISPGRAPAPPPA). The interval 113–329 (TLNPKYTFEN…GALMRVVAFS (217 aa)) is domain III, AAA+ region. Positions 157, 159, 160, and 161 each coordinate ATP. Positions 330–456 (SLNNVPFSRA…KGLEDEDSRA (127 aa)) are domain IV, binds dsDNA.

It belongs to the DnaA family. As to quaternary structure, oligomerizes as a right-handed, spiral filament on DNA at oriC.

Its subcellular location is the cytoplasm. Plays an essential role in the initiation and regulation of chromosomal replication. ATP-DnaA binds to the origin of replication (oriC) to initiate formation of the DNA replication initiation complex once per cell cycle. Binds the DnaA box (a 9 base pair repeat at the origin) and separates the double-stranded (ds)DNA. Forms a right-handed helical filament on oriC DNA; dsDNA binds to the exterior of the filament while single-stranded (ss)DNA is stabiized in the filament's interior. The ATP-DnaA-oriC complex binds and stabilizes one strand of the AT-rich DNA unwinding element (DUE), permitting loading of DNA polymerase. After initiation quickly degrades to an ADP-DnaA complex that is not apt for DNA replication. Binds acidic phospholipids. The chain is Chromosomal replication initiator protein DnaA from Deinococcus deserti (strain DSM 17065 / CIP 109153 / LMG 22923 / VCD115).